Consider the following 890-residue polypeptide: DNA mismatch repair protein MutS (890 aa).

Residue 607 to 614 (GPNMSGKS) coordinates ATP. A disordered region spans residues 832–851 (ESQLSFFGTEQSSKKQDKPV).

It belongs to the DNA mismatch repair MutS family.

Functionally, this protein is involved in the repair of mismatches in DNA. It is possible that it carries out the mismatch recognition step. This protein has a weak ATPase activity. This is DNA mismatch repair protein MutS from Bacillus cereus (strain 03BB102).